Here is a 579-residue protein sequence, read N- to C-terminus: Solute carrier family 15 member 5 (579 aa).

11 helical membrane passes run 77–97 (CQAAILNLCFIGTSILTPVFV), 110–130 (LVYICLFLHFLGTALLSVVAF), 154–174 (LFYVALLTICLGIGGVRAIVC), 191–211 (SFFNWFYWLMNLNATIVFLGI), 221–241 (ALVLLIPFMSMLMAVITLHMI), 304–324 (TFFLTLLPLFIFQLLYRMCIM), 343–363 (GFLLPIAVMNAISSLPLLILA), 386–406 (CIIAGNLFAALSVMIAGFFEI), 422–442 (VLTVSSMPCFYLILQYVLLGV), 472–492 (TLFNGFGCFTGALLVKLVYLI), and 509–529 (SFFFFLASLTLLNVLGFCSVS).

Belongs to the major facilitator superfamily. Proton-dependent oligopeptide transporter (POT/PTR) (TC 2.A.17) family.

The protein localises to the membrane. In terms of biological role, proton oligopeptide cotransporter. The chain is Solute carrier family 15 member 5 (SLC15A5) from Homo sapiens (Human).